The following is a 294-amino-acid chain: ATP synthase gamma chain (294 aa).

Belongs to the ATPase gamma chain family. As to quaternary structure, F-type ATPases have 2 components, CF(1) - the catalytic core - and CF(0) - the membrane proton channel. CF(1) has five subunits: alpha(3), beta(3), gamma(1), delta(1), epsilon(1). CF(0) has three main subunits: a, b and c.

Its subcellular location is the cell inner membrane. Functionally, produces ATP from ADP in the presence of a proton gradient across the membrane. The gamma chain is believed to be important in regulating ATPase activity and the flow of protons through the CF(0) complex. This chain is ATP synthase gamma chain, found in Rhizorhabdus wittichii (strain DSM 6014 / CCUG 31198 / JCM 15750 / NBRC 105917 / EY 4224 / RW1) (Sphingomonas wittichii).